The chain runs to 307 residues: Lipoyl synthase (307 aa).

[4Fe-4S] cluster is bound by residues cysteine 55, cysteine 60, cysteine 66, cysteine 81, cysteine 85, cysteine 88, and serine 292. Residues 67–281 form the Radical SAM core domain; the sequence is WEDREATFLI…ARHAEELGFS (215 aa).

Belongs to the radical SAM superfamily. Lipoyl synthase family. The cofactor is [4Fe-4S] cluster.

It is found in the cytoplasm. The catalysed reaction is [[Fe-S] cluster scaffold protein carrying a second [4Fe-4S](2+) cluster] + N(6)-octanoyl-L-lysyl-[protein] + 2 oxidized [2Fe-2S]-[ferredoxin] + 2 S-adenosyl-L-methionine + 4 H(+) = [[Fe-S] cluster scaffold protein] + N(6)-[(R)-dihydrolipoyl]-L-lysyl-[protein] + 4 Fe(3+) + 2 hydrogen sulfide + 2 5'-deoxyadenosine + 2 L-methionine + 2 reduced [2Fe-2S]-[ferredoxin]. Its pathway is protein modification; protein lipoylation via endogenous pathway; protein N(6)-(lipoyl)lysine from octanoyl-[acyl-carrier-protein]: step 2/2. In terms of biological role, catalyzes the radical-mediated insertion of two sulfur atoms into the C-6 and C-8 positions of the octanoyl moiety bound to the lipoyl domains of lipoate-dependent enzymes, thereby converting the octanoylated domains into lipoylated derivatives. The polypeptide is Lipoyl synthase (Mycolicibacterium paratuberculosis (strain ATCC BAA-968 / K-10) (Mycobacterium paratuberculosis)).